A 508-amino-acid polypeptide reads, in one-letter code: Photosystem II CP47 reaction center protein (508 aa).

A run of 6 helical transmembrane segments spans residues 21–36, 101–115, 140–156, 203–218, 237–252, and 457–472; these read SVHI…WAGS, IVFS…IWHW, GIHL…FGAF, IAAG…FHLS, VLSS…AFVV, and SFAL…HGAR.

Belongs to the PsbB/PsbC family. PsbB subfamily. As to quaternary structure, PSII is composed of 1 copy each of membrane proteins PsbA, PsbB, PsbC, PsbD, PsbE, PsbF, PsbH, PsbI, PsbJ, PsbK, PsbL, PsbM, PsbT, PsbX, PsbY, PsbZ, Psb30/Ycf12, at least 3 peripheral proteins of the oxygen-evolving complex and a large number of cofactors. It forms dimeric complexes. Requires Binds multiple chlorophylls. PSII binds additional chlorophylls, carotenoids and specific lipids. as cofactor.

It localises to the plastid. The protein resides in the chloroplast thylakoid membrane. One of the components of the core complex of photosystem II (PSII). It binds chlorophyll and helps catalyze the primary light-induced photochemical processes of PSII. PSII is a light-driven water:plastoquinone oxidoreductase, using light energy to abstract electrons from H(2)O, generating O(2) and a proton gradient subsequently used for ATP formation. The protein is Photosystem II CP47 reaction center protein of Vitis vinifera (Grape).